Consider the following 695-residue polypeptide: Interleukin-1 receptor accessory protein-like 1 (695 aa).

The N-terminal stretch at 1–24 (MKAPIPHLILLYATFTQSLKVVTK) is a signal peptide. Residues 25-134 (RGSADGCTDW…YCMKVSISLT (110 aa)) enclose the Ig-like C2-type 1 domain. Over 25 to 357 (RGSADGCTDW…LLHKRELMYT (333 aa)) the chain is Extracellular. 2 disulfide bridges follow: Cys-31/Cys-126 and Cys-53/Cys-118. N-linked (GlcNAc...) asparagine glycosylation is found at Asn-63, Asn-122, and Asn-138. Intrachain disulfides connect Cys-143–Cys-185 and Cys-164–Cys-216. Ig-like C2-type domains follow at residues 143 to 232 (CYNS…TELT) and 242 to 350 (PKLL…VLLH). N-linked (GlcNAc...) asparagine glycans are attached at residues Asn-213, Asn-264, and Asn-331. Cys-267 and Cys-334 are joined by a disulfide. Residues 358–378 (VELAGGLGAILLLLICSVTIY) form a helical membrane-spanning segment. Residues 379–695 (KCYKIEIMLF…RETSISSVIW (317 aa)) lie on the Cytoplasmic side of the membrane. Residues 403–558 (KDYDAYLSYT…KFWKRLQYEM (156 aa)) enclose the TIR domain. Glu-490 is a catalytic residue. Positions 548 to 643 (SKFWKRLQYE…TGTLPLTSIG (96 aa)) are interaction with NCS1. The interval 657 to 679 (NGQRPQTKSNREPNPDEAHTNSA) is disordered. The span at 665–675 (SNREPNPDEAH) shows a compositional bias: basic and acidic residues.

The protein belongs to the interleukin-1 receptor family. In terms of assembly, homodimer. Interacts (calcium-independent) with NCS1/FREQ. Interacts (via the first immunoglobilin domain) with PTPRD (via the second immunoglobilin domain); this interaction is PTPRD-splicing-dependent and induces pre- and post-synaptic differentiation of neurons and is required for IL1RAPL1-mediated synapse formation. In terms of tissue distribution, detected in total brain extracts, olfactory bulb, hippocampus and striatum (at protein level).

The protein resides in the cell membrane. It localises to the cytoplasm. It is found in the cell projection. The protein localises to the axon. Its subcellular location is the dendrite. It catalyses the reaction NAD(+) + H2O = ADP-D-ribose + nicotinamide + H(+). Its function is as follows. May regulate secretion and presynaptic differentiation through inhibition of the activity of N-type voltage-gated calcium channel. May activate the MAP kinase JNK. Plays a role in neurite outgrowth. During dendritic spine formation can bidirectionally induce pre- and post-synaptic differentiation of neurons by trans-synaptically binding to PTPRD. This Mus musculus (Mouse) protein is Interleukin-1 receptor accessory protein-like 1 (Il1rapl1).